A 365-amino-acid chain; its full sequence is Histidinol-phosphate aminotransferase (365 aa).

Lys-223 carries the N6-(pyridoxal phosphate)lysine modification.

Belongs to the class-II pyridoxal-phosphate-dependent aminotransferase family. Histidinol-phosphate aminotransferase subfamily. In terms of assembly, homodimer. It depends on pyridoxal 5'-phosphate as a cofactor.

The catalysed reaction is L-histidinol phosphate + 2-oxoglutarate = 3-(imidazol-4-yl)-2-oxopropyl phosphate + L-glutamate. Its pathway is amino-acid biosynthesis; L-histidine biosynthesis; L-histidine from 5-phospho-alpha-D-ribose 1-diphosphate: step 7/9. The chain is Histidinol-phosphate aminotransferase from Brucella melitensis biotype 1 (strain ATCC 23456 / CCUG 17765 / NCTC 10094 / 16M).